The chain runs to 401 residues: Formate-dependent phosphoribosylglycinamide formyltransferase (401 aa).

N(1)-(5-phospho-beta-D-ribosyl)glycinamide-binding positions include 22–23 (EL) and glutamate 82. ATP is bound by residues arginine 115, lysine 157, 162-167 (SSGKGQ), 197-200 (EGFI), and glutamate 205. Residues 120 to 315 (RLAAESLGLP…EFELHARAIL (196 aa)) enclose the ATP-grasp domain. Mg(2+) is bound by residues glutamate 274 and glutamate 286. N(1)-(5-phospho-beta-D-ribosyl)glycinamide-binding positions include aspartate 293, lysine 362, and 369–370 (RR).

This sequence belongs to the PurK/PurT family. Homodimer.

The catalysed reaction is N(1)-(5-phospho-beta-D-ribosyl)glycinamide + formate + ATP = N(2)-formyl-N(1)-(5-phospho-beta-D-ribosyl)glycinamide + ADP + phosphate + H(+). Its pathway is purine metabolism; IMP biosynthesis via de novo pathway; N(2)-formyl-N(1)-(5-phospho-D-ribosyl)glycinamide from N(1)-(5-phospho-D-ribosyl)glycinamide (formate route): step 1/1. Involved in the de novo purine biosynthesis. Catalyzes the transfer of formate to 5-phospho-ribosyl-glycinamide (GAR), producing 5-phospho-ribosyl-N-formylglycinamide (FGAR). Formate is provided by PurU via hydrolysis of 10-formyl-tetrahydrofolate. In Cupriavidus taiwanensis (strain DSM 17343 / BCRC 17206 / CCUG 44338 / CIP 107171 / LMG 19424 / R1) (Ralstonia taiwanensis (strain LMG 19424)), this protein is Formate-dependent phosphoribosylglycinamide formyltransferase.